Consider the following 106-residue polypeptide: PAT complex subunit Asterix (106 aa).

The disordered stretch occupies residues 1 to 29 (MSANNMSDPRRPNKVLRYKPPPSECNPAL). At serine 2 the chain carries N-acetylserine. Topologically, residues 2–32 (SANNMSDPRRPNKVLRYKPPPSECNPALDDP) are cytoplasmic. The helical transmembrane segment at 33–51 (TPDYMNLLGMIFSMCGLML) threads the bilayer. A topological domain (lumenal) is located at residue lysine 52. The chain crosses the membrane as a helical span at residues 53–70 (LKWCAWVAVYCSFISFAN). Residues 71–74 (SRSS) lie on the Cytoplasmic side of the membrane. A helical membrane pass occupies residues 75-95 (EDTKQMMSSFMLSISAVVMSY). Residues 96–106 (LQNPQPMTPPW) are Lumenal-facing.

Belongs to the Asterix family. In terms of assembly, component of the PAT complex, composed of WDR83OS/Asterix and CCDC47. The PAT complex is part of the multi-pass translocon (MPT) complex, composed of three subcomplexes, the GEL complex (composed of RAB5IF/OPTI and TMCO1), the BOS complex (composed of NCLN/Nicalin, NOMO1 and TMEM147) and the PAT complex (composed of WDR83OS/Asterix and CCDC47). The MPT complex associates with the SEC61 complex.

It is found in the endoplasmic reticulum membrane. In terms of biological role, component of the multi-pass translocon (MPT) complex that mediates insertion of multi-pass membrane proteins into the lipid bilayer of membranes. The MPT complex takes over after the SEC61 complex: following membrane insertion of the first few transmembrane segments of proteins by the SEC61 complex, the MPT complex occludes the lateral gate of the SEC61 complex to promote insertion of subsequent transmembrane regions. Within the MPT complex, the PAT subcomplex sequesters any highly polar regions in the transmembrane domains away from the non-polar membrane environment until they can be buried in the interior of the fully assembled protein. Within the PAT subcomplex, WDR83OS/Asterix binds to and redirects the substrate to a location behind the SEC61 complex. The chain is PAT complex subunit Asterix (WDR83OS) from Bos taurus (Bovine).